We begin with the raw amino-acid sequence, 351 residues long: Modulator of apoptosis 1 (351 aa).

An LIR motif is present at residues 49–52 (YRLL). The segment at 120-127 (LTRALAHE) is BH3-like. The RASSF1-binding stretch occupies residues 202-205 (KRRR).

This sequence belongs to the PNMA family. Homodimer. Under normal circumstances, held in an inactive conformation by an intramolecular interaction. Interacts with BAX. Binding to RASSF1 isoform A (RASSF1A) relieves this inhibitory interaction and allows further binding to BAX. Also binds to BCL2 and BCLX. Recruited to the TNFRSF1A and TNFRSF10A complexes in response to their respective cognate ligand, after internalization. Interacts with TRIM39. Interacts with RASSF6. Interacts with ATG8 proteins MAP1LC3A, MAP1LC3B and MAP1LC3C. Does not interact with ATG8 proteins GABARAPL1, GABARAPL2 and GABARAP. Interacts with SQSTM1; promoting dissociation of SQSTM1 inclusion bodies that sequester KEAP1. Ubiquitinated and degraded during mitotic exit by APC/C-Cdh1, this modification is inhibited by TRIM39.

It is found in the cytoplasm. The protein resides in the cytosol. It localises to the mitochondrion outer membrane. The protein localises to the extracellular vesicle membrane. Retrotransposon-derived protein that forms virion-like capsids. Acts as an effector of BAX during apoptosis: enriched at outer mitochondria membrane and associates with BAX upon induction of apoptosis, facilitating BAX-dependent mitochondrial outer membrane permeabilization and apoptosis. Required for death receptor-dependent apoptosis. When associated with RASSF1, promotes BAX conformational change and translocation to mitochondrial membranes in response to TNF and TNFSF10 stimulation. Also promotes autophagy: promotes phagophore closure via association with ATG8 proteins. Acts as an inhibitor of the NFE2L2/NRF2 pathway via interaction with SQSTM1: interaction promotes dissociation of SQSTM1 inclusion bodies that sequester KEAP1, relieving inactivation of the BCR(KEAP1) complex. The chain is Modulator of apoptosis 1 from Macaca fascicularis (Crab-eating macaque).